Consider the following 618-residue polypeptide: Acetolactate synthase (618 aa).

Positions 1–30 (MSAPTKPHSPTFKPEPHSAANEPKHPAARP) are disordered. Thiamine diphosphate is bound at residue glutamate 85. FAD is bound by residues arginine 187, 293 to 314 (HGTV…LGTR), and 336 to 355 (DIDP…IVGD). A thiamine pyrophosphate binding region spans residues 429-509 (QHQMWAAQFI…VKVALINNGN (81 aa)). Aspartate 480 and asparagine 507 together coordinate Mg(2+).

It belongs to the TPP enzyme family. It depends on Mg(2+) as a cofactor. The cofactor is thiamine diphosphate.

The enzyme catalyses 2 pyruvate + H(+) = (2S)-2-acetolactate + CO2. It participates in amino-acid biosynthesis; L-isoleucine biosynthesis; L-isoleucine from 2-oxobutanoate: step 1/4. It functions in the pathway amino-acid biosynthesis; L-valine biosynthesis; L-valine from pyruvate: step 1/4. This is Acetolactate synthase (ilvB) from Mycobacterium bovis (strain ATCC BAA-935 / AF2122/97).